The chain runs to 828 residues: Kinesin-associated protein 3 (828 aa).

ARM repeat units lie at residues 332–372 (YVEN…NLSF), 373–411 (DTDL…HVSQ), and 577–611 (DDSC…CQIV).

Heterotrimer of a 115 kDa subunit (KAP115) and two kinesin-like subunits of 95 kDa (KRP95) and 85 kDa (KRP85).

In terms of biological role, binds to the tail domain of the KRP85/KRP95 heterodimer to form a heterotrimeric kinesin-II complex and may regulate the spindle vesicle targeting of this complex. This chain is Kinesin-associated protein 3 (KAP115), found in Strongylocentrotus purpuratus (Purple sea urchin).